Reading from the N-terminus, the 774-residue chain is RNA exonuclease 5 (774 aa).

A compositionally biased stretch (basic and acidic residues) spans 1–19 (MEPEREGTERHPRKVRESR). Residues 1-22 (MEPEREGTERHPRKVRESRQAP) form a disordered region. The region spanning 228-376 (LFGLDCEMCL…EDARTILELA (149 aa)) is the Exonuclease domain. RRM domains are found at residues 505–579 (STVY…RPVT) and 600–679 (GSIY…RHLH).

The polypeptide is RNA exonuclease 5 (Homo sapiens (Human)).